The primary structure comprises 183 residues: Peptidyl-tRNA hydrolase (183 aa).

Residue Y14 coordinates tRNA. The Proton acceptor role is filled by H19. 2 residues coordinate tRNA: F64 and N66.

This sequence belongs to the PTH family. Monomer.

It localises to the cytoplasm. The enzyme catalyses an N-acyl-L-alpha-aminoacyl-tRNA + H2O = an N-acyl-L-amino acid + a tRNA + H(+). Functionally, hydrolyzes ribosome-free peptidyl-tRNAs (with 1 or more amino acids incorporated), which drop off the ribosome during protein synthesis, or as a result of ribosome stalling. Catalyzes the release of premature peptidyl moieties from peptidyl-tRNA molecules trapped in stalled 50S ribosomal subunits, and thus maintains levels of free tRNAs and 50S ribosomes. This is Peptidyl-tRNA hydrolase from Syntrophomonas wolfei subsp. wolfei (strain DSM 2245B / Goettingen).